The following is a 235-amino-acid chain: Photosystem I assembly protein Ycf4 (235 aa).

2 helical membrane passes run 21 to 43 (NLCW…TSSY) and 63 to 85 (GIVM…CTIL).

It belongs to the Ycf4 family.

It localises to the plastid. It is found in the chloroplast thylakoid membrane. Functionally, seems to be required for the assembly of the photosystem I complex. The chain is Photosystem I assembly protein Ycf4 from Amborella trichopoda.